The chain runs to 105 residues: Thioredoxin (105 aa).

The Thioredoxin domain maps to 1 to 105 (MANNVMDSSF…SLLDWINKSI (105 aa)). Cysteines 30 and 33 form a disulfide.

This sequence belongs to the thioredoxin family.

In terms of biological role, component of the thioredoxin-thioredoxin reductase system. Participates in various redox reactions through the reversible oxidation of its active center dithiol to a disulfide and catalyzes dithiol-disulfide exchange reactions. The polypeptide is Thioredoxin (trxA) (Rickettsia conorii (strain ATCC VR-613 / Malish 7)).